The chain runs to 224 residues: Ribonuclease T (224 aa).

The Exonuclease domain maps to 32 to 206 (VVVDVETGGF…YDTEKTAELF (175 aa)). Mg(2+) is bound by residues aspartate 35, glutamate 37, histidine 193, and aspartate 198. Histidine 193 functions as the Proton donor/acceptor in the catalytic mechanism.

Belongs to the RNase T family. Homodimer. Mg(2+) serves as cofactor.

Functionally, trims short 3' overhangs of a variety of RNA species, leaving a one or two nucleotide 3' overhang. Responsible for the end-turnover of tRNA: specifically removes the terminal AMP residue from uncharged tRNA (tRNA-C-C-A). Also appears to be involved in tRNA biosynthesis. The sequence is that of Ribonuclease T from Pseudomonas aeruginosa (strain UCBPP-PA14).